The sequence spans 264 residues: Thymidylate synthase (264 aa).

Arg21 serves as a coordination point for dUMP. Residue His51 participates in (6R)-5,10-methylene-5,6,7,8-tetrahydrofolate binding. 126 to 127 (RR) lines the dUMP pocket. Cys146 serves as the catalytic Nucleophile. DUMP-binding positions include 166-169 (RSAD), Asn177, and 207-209 (HIY). (6R)-5,10-methylene-5,6,7,8-tetrahydrofolate is bound at residue Asp169. Position 263 (Ala263) interacts with (6R)-5,10-methylene-5,6,7,8-tetrahydrofolate.

The protein belongs to the thymidylate synthase family. Bacterial-type ThyA subfamily. As to quaternary structure, homodimer.

It is found in the cytoplasm. The catalysed reaction is dUMP + (6R)-5,10-methylene-5,6,7,8-tetrahydrofolate = 7,8-dihydrofolate + dTMP. It functions in the pathway pyrimidine metabolism; dTTP biosynthesis. Catalyzes the reductive methylation of 2'-deoxyuridine-5'-monophosphate (dUMP) to 2'-deoxythymidine-5'-monophosphate (dTMP) while utilizing 5,10-methylenetetrahydrofolate (mTHF) as the methyl donor and reductant in the reaction, yielding dihydrofolate (DHF) as a by-product. This enzymatic reaction provides an intracellular de novo source of dTMP, an essential precursor for DNA biosynthesis. The sequence is that of Thymidylate synthase from Ruthia magnifica subsp. Calyptogena magnifica.